The primary structure comprises 128 residues: Large ribosomal subunit protein bL19 (128 aa).

Belongs to the bacterial ribosomal protein bL19 family.

Functionally, this protein is located at the 30S-50S ribosomal subunit interface and may play a role in the structure and function of the aminoacyl-tRNA binding site. This chain is Large ribosomal subunit protein bL19, found in Paraburkholderia xenovorans (strain LB400).